We begin with the raw amino-acid sequence, 1039 residues long: FHIP family protein GG24907 (1039 aa).

Phosphoserine is present on residues serine 498 and serine 805. Disordered regions lie at residues 831-877 (ATPT…SASS), 904-945 (GISQ…SNSS), and 957-984 (SNTT…SEPA). Polar residues-rich tracts occupy residues 855–877 (TSMF…SASS) and 904–924 (GISQ…TQPQ). Positions 925–945 (AGASRTGATATSAAASGSNSS) are enriched in low complexity. Positions 957–966 (SNTTTHSAST) are enriched in polar residues.

This sequence belongs to the FHIP family.

The polypeptide is FHIP family protein GG24907 (Drosophila erecta (Fruit fly)).